The sequence spans 270 residues: Type III pantothenate kinase (270 aa).

ATP is bound at residue Asp19 to Thr26. Substrate-binding positions include Tyr109 and Gly116–Arg119. Asp118 functions as the Proton acceptor in the catalytic mechanism. Asp139 is a K(+) binding site. Thr142 lines the ATP pocket. Thr194 is a binding site for substrate.

The protein belongs to the type III pantothenate kinase family. As to quaternary structure, homodimer. NH4(+) serves as cofactor. It depends on K(+) as a cofactor.

Its subcellular location is the cytoplasm. The catalysed reaction is (R)-pantothenate + ATP = (R)-4'-phosphopantothenate + ADP + H(+). The protein operates within cofactor biosynthesis; coenzyme A biosynthesis; CoA from (R)-pantothenate: step 1/5. Functionally, catalyzes the phosphorylation of pantothenate (Pan), the first step in CoA biosynthesis. The sequence is that of Type III pantothenate kinase from Chlorobaculum tepidum (strain ATCC 49652 / DSM 12025 / NBRC 103806 / TLS) (Chlorobium tepidum).